The sequence spans 477 residues: Regulator of G-protein signaling 7 (477 aa).

Positions 37–112 (EKNGIPIRTV…DDGTFYRFQT (76 aa)) constitute a DEP domain. Ser-229 and Ser-241 each carry phosphoserine. Residues 236–257 (DIRSHSPTHTPTPETKPPTEDE) form a disordered region. Phosphothreonine is present on Thr-243. Residues 255–316 (EDELHRQIKY…LSDDTTFWEL (62 aa)) form the G protein gamma domain. An RGS domain is found at 333–448 (GMDEALKDPV…IRSSAYQELL (116 aa)). At Ser-434 the chain carries Phosphoserine.

As to quaternary structure, interacts with GNB5, forming the RGS7-GNB5 complex. Interacts with GPR158; promotes the GTPase activator activity of the RGS7-GNB5 complex in absence of glycine, in contrast GTPase activator activity of the RGS7-GNB5 complex is inhibited in presence of glycine. Interacts with GPR179. Interacts with PKD1; this prevents rapid proteasomal degradation. Interacts with RGS7BP, leading to regulate the subcellular location of the heterodimer formed with GNB5. Interacts (phosphorylated form) with 14-3-3 protein YWHAQ. Interacts with SNAPIN. Interacts with GNAI1. Interacts with GNAO1, GNAI3 and GNAZ. In terms of processing, palmitoylated. Ubiquitinated, leading to rapid proteasomal degradation. Post-translationally, phosphorylation and subsequent interaction with 14-3-3 proteins inhibits GAP activity. In terms of tissue distribution, brain-specific. Predominantly cerebellar granule cells.

Its subcellular location is the cytoplasm. The protein resides in the cytosol. The protein localises to the cell membrane. It is found in the membrane. GTPase activator component of the RGS7-GNB5 complex that regulates G protein-coupled receptor signaling cascades. The RGS7-GNB5 complex acts as an inhibitor signal transduction by promoting the GTPase activity of G protein alpha subunits, such as GNAO1, thereby driving them into their inactive GDP-bound form. May play a role in synaptic vesicle exocytosis. Glycine-dependent regulation of the RGS7-GNB5 complex by GPR158 affects mood and cognition via its ability to regulate neuronal excitability in L2/L3 pyramidal neurons of the prefrontal cortex. Modulates the activity of potassium channels that are activated by GNAO1 in response to muscarinic acetylcholine receptor M2/CHRM2 signaling. The polypeptide is Regulator of G-protein signaling 7 (Rgs7) (Rattus norvegicus (Rat)).